The chain runs to 990 residues: Envelope glycoprotein gp160 (990 aa).

A signal peptide spans 1–107 (MASSKNMPSR…CLIWEMGKKH (107 aa)). At 108–838 (SCNAEEVIAL…WSGWFSWLKY (731 aa)) the chain is on the extracellular side. 23 N-linked (GlcNAc...) asparagine; by host glycosylation sites follow: Asn141, Asn162, Asn207, Asn259, Asn299, Asn363, Asn386, Asn402, Asn413, Asn434, Asn438, Asn469, Asn474, Asn480, Asn490, Asn500, Asn514, Asn526, Asn536, Asn542, Asn550, Asn560, and Asn567. Residues 663–683 (GIGLVIVLAIMAIIAAAGAGL) are fusion peptide. Residues 695–745 (RTAVQSLANATAAQQNVLEATYAMVQHVAKGVRILEARVARVEAIVDRMML) are a coiled coil. N-linked (GlcNAc...) asparagine; by host glycosylation occurs at Asn703. Residues 729–745 (LEARVARVEAIVDRMML) form an immunosuppression region. Asn771, Asn778, and Asn794 each carry an N-linked (GlcNAc...) asparagine; by host glycan. A coiled-coil region spans residues 786-821 (EEIEQHEANLSLLLKEAALQVQIAQRDAQRIPDVWK). Residues 839–859 (IPWIVVCIVGVICFRLLMCVI) traverse the membrane as a helical segment. The Cytoplasmic portion of the chain corresponds to 860–990 (TMCLQAYRQV…AIENEYVELS (131 aa)). A lipid anchor (S-palmitoyl cysteine; by host) is attached at Cys862. The interval 890–909 (KQREERDGSSGSENLEHEKR) is disordered.

As to quaternary structure, the mature envelope protein (Env) consists of a trimer of SU-TM heterodimers attached by noncovalent interactions or by a labile interchain disulfide bond. Post-translationally, specific enzymatic cleavages in vivo yield mature proteins. Envelope glycoproteins are synthesized as an inactive precursor that is N-glycosylated and processed likely by host cell furin or by a furin-like protease in the Golgi to yield the mature SU and TM proteins. The cleavage site between SU and TM requires the minimal sequence [KR]-X-[KR]-R. In terms of processing, the transmembrane protein is palmitoylated.

It localises to the virion membrane. Its subcellular location is the host cell membrane. The surface protein (SU) attaches the virus to the host cell by binding to its receptor. This interaction triggers the refolding of the transmembrane protein (TM) and is thought to activate its fusogenic potential by unmasking its fusion peptide. Fusion occurs at the host cell plasma membrane. Its function is as follows. The transmembrane protein (TM) acts as a class I viral fusion protein. Under the current model, the protein has at least 3 conformational states: pre-fusion native state, pre-hairpin intermediate state, and post-fusion hairpin state. During viral and target cell membrane fusion, the coiled coil regions (heptad repeats) assume a trimer-of-hairpins structure, positioning the fusion peptide in close proximity to the C-terminal region of the ectodomain. The formation of this structure appears to drive apposition and subsequent fusion of viral and target cell membranes. Membranes fusion leads to delivery of the nucleocapsid into the cytoplasm. The polypeptide is Envelope glycoprotein gp160 (env) (Ovine maedi visna related virus (strain South Africa) (SA-OMVV)).